The chain runs to 574 residues: Excitatory amino acid transporter 2 (574 aa).

At 1-44 (MASTEGANNMPKQVEVRMHDSHLGSEEPKHRHLGLRLCDKLGKN) the chain is on the cytoplasmic side. Phosphoserine occurs at positions 3, 21, and 25. C38 carries S-palmitoyl cysteine lipidation. The chain crosses the membrane as a helical span at residues 45–64 (LLLTLTVFGVILGAVCGGLL). The Extracellular segment spans residues 65–87 (RLASPIHPDVVMLIAFPGDILMR). The helical transmembrane segment at 88 to 108 (MLKMLILPLIISSLITGLSGL) threads the bilayer. At 109–120 (DAKASGRLGTRA) the chain is on the cytoplasmic side. The helical transmembrane segment at 121–142 (MVYYMSTTIIAAVLGVILVLAI) threads the bilayer. Over 143–235 (HPGNPKLKKQ…TKMVIKKGLE (93 aa)) the chain is Extracellular. N206 and N216 each carry an N-linked (GlcNAc...) asparagine glycan. A helical transmembrane segment spans residues 236–259 (FKDGMNVLGLIGFFIAFGIAMGKM). At 260–268 (GDQAKLMVD) the chain is on the cytoplasmic side. Residues 269–296 (FFNILNEIVMKLVIMIMWYSPLGIACLI) form a helical membrane-spanning segment. Residues 297–317 (CGKIIAIKDLEVVARQLGMYM) are Extracellular-facing. The helical transmembrane segment at 318 to 339 (VTVIIGLIIHGGIFLPLIYFVV) threads the bilayer. The Cytoplasmic portion of the chain corresponds to 340–344 (TRKNP). An intramembrane region (discontinuously helical) is located at residues 345-375 (FSFFAGIFQAWITALGTASSAGTLPVTFRCL). 362–364 (ASS) provides a ligand contact to L-aspartate. Residues 376–384 (EENLGIDKR) are Cytoplasmic-facing. Residues 385–411 (VTRFVLPVGATINMDGTALYEAVAAIF) traverse the membrane as a helical segment. Positions 393, 395, and 397 each coordinate Na(+). Residue T401 coordinates L-aspartate. Over 412-424 (IAQMNGVVLDGGQ) the chain is Extracellular. Residues 425-458 (IVTVSLTATLASVGAASIPSAGLVTMLLILTAVG) constitute an intramembrane region (discontinuously helical). Residue 442 to 446 (IPSAG) coordinates L-aspartate. The Extracellular portion of the chain corresponds to 459–471 (LPTEDISLLVAVD). Residues 472-493 (WLLDRMRTSVNVVGDSFGAGIV) form a helical membrane-spanning segment. Positions 475 and 482 each coordinate L-aspartate. Na(+) is bound by residues N482 and D486. At 494 to 574 (YHLSKSELDT…VEEEPWKREK (81 aa)) the chain is on the cytoplasmic side. 4 positions are modified to phosphoserine: S506, S521, S532, and S534. Y539 is modified (phosphotyrosine). S544, S560, and S564 each carry phosphoserine.

This sequence belongs to the dicarboxylate/amino acid:cation symporter (DAACS) (TC 2.A.23) family. SLC1A2 subfamily. Homotrimer. Isoform 3 can oligomerize with isoform 1. Interacts with AJUBA. Glycosylated. Post-translationally, palmitoylation at Cys-38 is not required for correct subcellular localization, but is important for glutamate uptake activity.

It is found in the cell membrane. It carries out the reaction K(+)(in) + L-glutamate(out) + 3 Na(+)(out) + H(+)(out) = K(+)(out) + L-glutamate(in) + 3 Na(+)(in) + H(+)(in). The catalysed reaction is K(+)(in) + L-aspartate(out) + 3 Na(+)(out) + H(+)(out) = K(+)(out) + L-aspartate(in) + 3 Na(+)(in) + H(+)(in). It catalyses the reaction D-aspartate(out) + K(+)(in) + 3 Na(+)(out) + H(+)(out) = D-aspartate(in) + K(+)(out) + 3 Na(+)(in) + H(+)(in). In terms of biological role, sodium-dependent, high-affinity amino acid transporter that mediates the uptake of L-glutamate and also L-aspartate and D-aspartate. Functions as a symporter that transports one amino acid molecule together with two or three Na(+) ions and one proton, in parallel with the counter-transport of one K(+) ion. Mediates Cl(-) flux that is not coupled to amino acid transport; this avoids the accumulation of negative charges due to aspartate and Na(+) symport. Essential for the rapid removal of released glutamate from the synaptic cleft, and for terminating the postsynaptic action of glutamate. This Homo sapiens (Human) protein is Excitatory amino acid transporter 2.